We begin with the raw amino-acid sequence, 198 residues long: Peptidyl-tRNA hydrolase (198 aa).

A tRNA-binding site is contributed by Y15. Residue H20 is the Proton acceptor of the active site. 3 residues coordinate tRNA: F65, N67, and N113.

The protein belongs to the PTH family. Monomer.

It localises to the cytoplasm. The enzyme catalyses an N-acyl-L-alpha-aminoacyl-tRNA + H2O = an N-acyl-L-amino acid + a tRNA + H(+). Functionally, hydrolyzes ribosome-free peptidyl-tRNAs (with 1 or more amino acids incorporated), which drop off the ribosome during protein synthesis, or as a result of ribosome stalling. Its function is as follows. Catalyzes the release of premature peptidyl moieties from peptidyl-tRNA molecules trapped in stalled 50S ribosomal subunits, and thus maintains levels of free tRNAs and 50S ribosomes. This chain is Peptidyl-tRNA hydrolase, found in Ehrlichia chaffeensis (strain ATCC CRL-10679 / Arkansas).